A 262-amino-acid chain; its full sequence is Thioredoxin-like protein HCF164, chloroplastic (262 aa).

A chloroplast-targeting transit peptide spans 1–54; the sequence is MAVVASRCTGLLLPDLGASLAGFRRRRSTPASSLSFRPRRARRRLGSLSCIAPP. The disordered stretch occupies residues 47-90; it reads SLSCIAPPDSAEPQTDEPAAKDDSTEDKAEASSASQDAGNPTFP. Residues 64 to 76 are compositionally biased toward basic and acidic residues; that stretch reads PAAKDDSTEDKAE. Residues 78 to 89 are compositionally biased toward polar residues; sequence SSASQDAGNPTF. Residues 78–230 enclose the Thioredoxin domain; it reads SSASQDAGNP…FLDNVVALAS (153 aa). Active-site nucleophile residues include Cys-151 and Cys-154. Residues Cys-151 and Cys-154 are joined by a disulfide bond.

The protein belongs to the thioredoxin family.

The protein localises to the plastid. Its subcellular location is the chloroplast. Its function is as follows. Probable thiol-disulfide oxidoreductase that may participate in various redox reactions in the chloroplast. The chain is Thioredoxin-like protein HCF164, chloroplastic from Oryza sativa subsp. japonica (Rice).